Reading from the N-terminus, the 221-residue chain is 7-cyano-7-deazaguanine synthase (221 aa).

Phenylalanine 12 to leucine 22 lines the ATP pocket. Zn(2+) is bound by residues cysteine 190, cysteine 199, cysteine 202, and cysteine 205.

The protein belongs to the QueC family. As to quaternary structure, homodimer. Requires Zn(2+) as cofactor.

The catalysed reaction is 7-carboxy-7-deazaguanine + NH4(+) + ATP = 7-cyano-7-deazaguanine + ADP + phosphate + H2O + H(+). The protein operates within purine metabolism; 7-cyano-7-deazaguanine biosynthesis. Catalyzes the ATP-dependent conversion of 7-carboxy-7-deazaguanine (CDG) to 7-cyano-7-deazaguanine (preQ(0)). The chain is 7-cyano-7-deazaguanine synthase from Clostridium novyi (strain NT).